The following is a 371-amino-acid chain: GTPase Obg (371 aa).

Residues 1–159 (MKFVDEAYID…KNLKLELKVL (159 aa)) enclose the Obg domain. Positions 160–334 (ADVGLLGMPN…LIRTIYKHVH (175 aa)) constitute an OBG-type G domain. Residues 166 to 173 (GMPNAGKS), 191 to 195 (FTTLH), 213 to 216 (DIPG), 284 to 287 (NKLD), and 315 to 317 (SAL) contribute to the GTP site. Residues S173 and T193 each contribute to the Mg(2+) site.

It belongs to the TRAFAC class OBG-HflX-like GTPase superfamily. OBG GTPase family. As to quaternary structure, monomer. Mg(2+) is required as a cofactor.

The protein resides in the cytoplasm. Its function is as follows. An essential GTPase which binds GTP, GDP and possibly (p)ppGpp with moderate affinity, with high nucleotide exchange rates and a fairly low GTP hydrolysis rate. Plays a role in control of the cell cycle, stress response, ribosome biogenesis and in those bacteria that undergo differentiation, in morphogenesis control. This Delftia acidovorans (strain DSM 14801 / SPH-1) protein is GTPase Obg.